We begin with the raw amino-acid sequence, 329 residues long: Serpentine receptor class alpha-4 (329 aa).

A run of 6 helical transmembrane segments spans residues 25–45 (IIVL…IKVV), 103–123 (LYLE…TGLL), 144–164 (GLAI…LIIW), 188–208 (YFQS…ILIW), 238–258 (ICFL…GFFI), and 273–293 (LVAV…ILIF).

This sequence belongs to the nematode receptor-like protein sra family.

It is found in the membrane. In Caenorhabditis elegans, this protein is Serpentine receptor class alpha-4 (sra-4).